The sequence spans 131 residues: uncharacterized protein (131 aa).

The region spanning 14–130 (FLLIYSSLEV…RRLPASFLST (117 aa)) is the MSP domain.

This is an uncharacterized protein from Caenorhabditis elegans.